The following is a 129-amino-acid chain: MRKLFFCGVLALAVAFALPVVAAPKAPADGLKMEATKQPVVFNHSTHKSVKCGDCHHPVNGKEDYRKCGTAGCHDSMDKKDKSAKGYYHVMHDKNTKFKSCVGCHVEVAGADAAKKKDLTGCKKSKCHE.

An N-terminal signal peptide occupies residues 1 to 22 (MRKLFFCGVLALAVAFALPVVA). Residues His-44, His-47, Cys-52, Cys-55, His-56, His-57, Cys-68, Cys-73, His-74, His-92, Cys-101, Cys-104, His-105, Cys-122, Cys-127, and His-128 each coordinate heme c.

Binds 4 heme c groups per subunit.

Its subcellular location is the periplasm. Functionally, participates in sulfate respiration coupled with phosphorylation by transferring electrons from the enzyme dehydrogenase to ferredoxin. This is Cytochrome c3 from Nitratidesulfovibrio vulgaris (strain ATCC 29579 / DSM 644 / CCUG 34227 / NCIMB 8303 / VKM B-1760 / Hildenborough) (Desulfovibrio vulgaris).